We begin with the raw amino-acid sequence, 431 residues long: Transposase for insertion sequence element IS232 (431 aa).

The region spanning 20–79 is the HTH IS21-type domain; sequence PNFKKLMGNLKMKINKSQLARELNVDRRTIDKYLNGFTPKGTKNKTSKIDTYYEVIAALL. A DNA-binding region (H-T-H motif) is located at residues 35–54; the sequence is KSQLARELNVDRRTIDKYLN. Residues 140–315 form the Integrase catalytic domain; the sequence is YETPPGEQAQ…IPVFALKQEK (176 aa).

Belongs to the transposase IS21/IS408/IS1162 family.

In terms of biological role, involved in the transposition of the insertion sequence. The sequence is that of Transposase for insertion sequence element IS232 from Bacillus thuringiensis subsp. berliner.